Reading from the N-terminus, the 223-residue chain is Prolactin-3D4 (223 aa).

The first 28 residues, 1 to 28, serve as a signal peptide directing secretion; sequence MQLTLTLSGSSMQLLLLVSNLLLWENMA. 2 disulfides stabilise this stretch: cysteine 80–cysteine 198 and cysteine 215–cysteine 223. Asparagine 108 and asparagine 157 each carry an N-linked (GlcNAc...) asparagine glycan.

The protein belongs to the somatotropin/prolactin family. N-glycosylated.

It localises to the secreted. The sequence is that of Prolactin-3D4 (Prl3d4) from Rattus norvegicus (Rat).